The following is a 241-amino-acid chain: Uridylate kinase (241 aa).

15 to 18 (KLSG) serves as a coordination point for ATP. An involved in allosteric activation by GTP region spans residues 23–28 (GAEGFG). Residue glycine 57 coordinates UMP. 2 residues coordinate ATP: glycine 58 and arginine 62. UMP-binding positions include aspartate 77 and 138–145 (TGNPFFTT). Positions 165, 171, and 174 each coordinate ATP.

Belongs to the UMP kinase family. In terms of assembly, homohexamer.

The protein resides in the cytoplasm. The catalysed reaction is UMP + ATP = UDP + ADP. The protein operates within pyrimidine metabolism; CTP biosynthesis via de novo pathway; UDP from UMP (UMPK route): step 1/1. With respect to regulation, allosterically activated by GTP. Inhibited by UTP. Catalyzes the reversible phosphorylation of UMP to UDP. In Serratia proteamaculans (strain 568), this protein is Uridylate kinase.